The chain runs to 931 residues: Glycine dehydrogenase (decarboxylating) (931 aa).

Position 684 is an N6-(pyridoxal phosphate)lysine (lysine 684).

The protein belongs to the GcvP family. In terms of assembly, the glycine cleavage system is composed of four proteins: P, T, L and H. The cofactor is pyridoxal 5'-phosphate.

The enzyme catalyses N(6)-[(R)-lipoyl]-L-lysyl-[glycine-cleavage complex H protein] + glycine + H(+) = N(6)-[(R)-S(8)-aminomethyldihydrolipoyl]-L-lysyl-[glycine-cleavage complex H protein] + CO2. In terms of biological role, the glycine cleavage system catalyzes the degradation of glycine. The P protein binds the alpha-amino group of glycine through its pyridoxal phosphate cofactor; CO(2) is released and the remaining methylamine moiety is then transferred to the lipoamide cofactor of the H protein. The chain is Glycine dehydrogenase (decarboxylating) from Bartonella henselae (strain ATCC 49882 / DSM 28221 / CCUG 30454 / Houston 1) (Rochalimaea henselae).